Consider the following 272-residue polypeptide: MKYRILMATLLAVCLGIFSLSAPAFAAKQTLTYDDIVGTGLANKCPTLDDTARGAYPIDSSQTYRIARLCLQPTTFLVKEEPKNKRQEAEFVPTKLVTRETTSLDQIQGELKVNSDGSLTFVEEDGIDFQPVTVQMAGGERIPLLFTVKNLVASTQPNVTSITTSTDFKGEFNVPSYRTANFLDPKGRGLASGYDSAIALPQAKEEELARANVKRFSLTKGQISLNVAKVDGRTGEIAGTFESEQLSDDDMGAHEPHEVKIQGVFYASIEPA.

The first 26 residues, Met-1–Ala-26, serve as a signal peptide directing secretion.

This sequence belongs to the PsbO family. In terms of assembly, PSII is composed of 1 copy each of membrane proteins PsbA, PsbB, PsbC, PsbD, PsbE, PsbF, PsbH, PsbI, PsbJ, PsbK, PsbL, PsbM, PsbT, PsbX, PsbY, PsbZ, Psb30/Ycf12, peripheral proteins PsbO, CyanoQ (PsbQ), PsbU, PsbV and a large number of cofactors. It forms dimeric complexes.

The protein resides in the cellular thylakoid membrane. In terms of biological role, one of the extrinsic, lumenal subunits of photosystem II (PSII), which stabilize and protect the oxygen-evolving complex. PSII is a light-driven water plastoquinone oxidoreductase, using light energy to abstract electrons from H(2)O, generating a proton gradient subsequently used for ATP formation. Required for dimerization of PSII and for binding of PsbQ to PSII. The chain is Photosystem II extrinsic protein O (psbO) from Synechococcus elongatus.